A 310-amino-acid polypeptide reads, in one-letter code: 26S proteasome non-ATPase regulatory subunit 7 homolog B (310 aa).

M1 is subject to N-acetylmethionine. Positions 17-154 (VIVHPLVLLS…YYAVEEVKEN (138 aa)) constitute an MPN domain.

The protein belongs to the peptidase M67A family. As to quaternary structure, component of the 19S regulatory particle (RP/PA700) lid subcomplex of the 26S proteasome. The 26S proteasome is composed of a core protease (CP), known as the 20S proteasome, capped at one or both ends by the 19S regulatory particle (RP/PA700). The RP/PA700 complex is composed of at least 17 different subunits in two subcomplexes, the base and the lid, which form the portions proximal and distal to the 20S proteolytic core, respectively.

In terms of biological role, acts as a regulatory subunit of the 26S proteasome which is involved in the ATP-dependent degradation of ubiquitinated proteins. This is 26S proteasome non-ATPase regulatory subunit 7 homolog B (RPN8B) from Arabidopsis thaliana (Mouse-ear cress).